The following is a 345-amino-acid chain: Tropomodulin-4 (345 aa).

Positions 42 to 63 are disordered; sequence NMLLPAGLRQRDQTKKSPTGPL.

It belongs to the tropomodulin family. As to quaternary structure, binds to the N-terminus of tropomyosin and to actin.

It is found in the cytoplasm. Its subcellular location is the cytoskeleton. In terms of biological role, blocks the elongation and depolymerization of the actin filaments at the pointed end. The Tmod/TM complex contributes to the formation of the short actin protofilament, which in turn defines the geometry of the membrane skeleton. The chain is Tropomodulin-4 (TMOD4) from Bos taurus (Bovine).